We begin with the raw amino-acid sequence, 230 residues long: CASP-like protein 2A2 (230 aa).

The disordered stretch occupies residues 1–23 (MEKKDEGNPPMAVMGSRDENEDV). Over 1-29 (MEKKDEGNPPMAVMGSRDENEDVKSTMRT) the chain is Cytoplasmic. Residues 30–50 (AETMLRLVPVALCVSALVVML) traverse the membrane as a helical segment. Topologically, residues 51 to 71 (KNTQTNDYGSLSYSDLGAFRY) are extracellular. A helical membrane pass occupies residues 72–92 (LVNANGICAGYSLLSAVIVAM). Topologically, residues 93–100 (PRAWTMPQ) are cytoplasmic. A helical membrane pass occupies residues 101-121 (AWTFFLLDQVLTYVILAAGTV). At 122 to 151 (STEVLYLANKGDTSIAWSAACASFGGFCHK) the chain is on the extracellular side. Residues 152–172 (ALISTVITFVAVIFYAALSLV) traverse the membrane as a helical segment. At 173–230 (SSYKLFSKYDAPVVTQSGEGIKTVTLGSPPPPPPPPPSNLHLHLHAKLACPAHNNSPN) the chain is on the cytoplasmic side.

Belongs to the Casparian strip membrane proteins (CASP) family. Homodimer and heterodimers.

Its subcellular location is the cell membrane. In Populus trichocarpa (Western balsam poplar), this protein is CASP-like protein 2A2.